Consider the following 240-residue polypeptide: Ribonuclease PH (240 aa).

Phosphate contacts are provided by residues arginine 87 and 125 to 127 (GTR).

It belongs to the RNase PH family. Homohexameric ring arranged as a trimer of dimers.

It carries out the reaction tRNA(n+1) + phosphate = tRNA(n) + a ribonucleoside 5'-diphosphate. In terms of biological role, phosphorolytic 3'-5' exoribonuclease that plays an important role in tRNA 3'-end maturation. Removes nucleotide residues following the 3'-CCA terminus of tRNAs; can also add nucleotides to the ends of RNA molecules by using nucleoside diphosphates as substrates, but this may not be physiologically important. Probably plays a role in initiation of 16S rRNA degradation (leading to ribosome degradation) during starvation. In Crocosphaera subtropica (strain ATCC 51142 / BH68) (Cyanothece sp. (strain ATCC 51142)), this protein is Ribonuclease PH.